A 584-amino-acid polypeptide reads, in one-letter code: Glutathione hydrolase proenzyme (584 aa).

Positions 1–25 (MAPAAMNLLCTVLYLLSSFAQVSDA) are cleaved as a signal peptide. The N-linked (GlcNAc...) asparagine glycan is linked to asparagine 111. Arginine 120 provides a ligand contact to L-glutamate. Residues asparagine 135, asparagine 262, asparagine 272, asparagine 350, and asparagine 370 are each glycosylated (N-linked (GlcNAc...) asparagine). Catalysis depends on threonine 395, which acts as the Nucleophile. Residues threonine 413, glutamate 434, and 465-466 (SS) contribute to the L-glutamate site. Asparagine 547 carries N-linked (GlcNAc...) asparagine glycosylation.

The protein belongs to the gamma-glutamyltransferase family. In terms of assembly, heterodimer composed of the light and heavy chains. The active site is located in the light chain. Cleaved by autocatalysis into a large and a small subunit and the autocatalytic cleavage is essential to the functional activation of the enzyme.

It is found in the secreted. The enzyme catalyses an N-terminal (5-L-glutamyl)-[peptide] + an alpha-amino acid = 5-L-glutamyl amino acid + an N-terminal L-alpha-aminoacyl-[peptide]. It catalyses the reaction glutathione + H2O = L-cysteinylglycine + L-glutamate. It carries out the reaction an S-substituted glutathione + H2O = an S-substituted L-cysteinylglycine + L-glutamate. The catalysed reaction is leukotriene C4 + H2O = leukotriene D4 + L-glutamate. It participates in sulfur metabolism; glutathione metabolism. Cleaves the gamma-glutamyl bond of extracellular glutathione (gamma-Glu-Cys-Gly), glutathione conjugates, and other gamma-glutamyl compounds. The metabolism of glutathione releases free glutamate and the dipeptide cysteinyl-glycine, which is hydrolyzed to cysteine and glycine by dipeptidases. In the presence of high concentrations of dipeptides and some amino acids, can also catalyze a transpeptidation reaction, transferring the gamma-glutamyl moiety to an acceptor amino acid to form a new gamma-glutamyl compound. Initiates extracellular glutathione (GSH) breakdown, provides cells with a local cysteine supply and contributes to maintain intracellular GSH level. It is part of the cell antioxidant defense mechanism. The sequence is that of Glutathione hydrolase proenzyme from Arthroderma benhamiae (strain ATCC MYA-4681 / CBS 112371) (Trichophyton mentagrophytes).